We begin with the raw amino-acid sequence, 678 residues long: DNA ligase (678 aa).

NAD(+)-binding positions include 47–51 (DSDYD), 96–97 (SL), and glutamate 122. The active-site N6-AMP-lysine intermediate is the lysine 124. Positions 145, 182, 300, and 324 each coordinate NAD(+). 4 residues coordinate Zn(2+): cysteine 418, cysteine 421, cysteine 436, and cysteine 442. The BRCT domain occupies 602–678 (AYNESFTGKT…ILEDNLKDLL (77 aa)).

The protein belongs to the NAD-dependent DNA ligase family. LigA subfamily. It depends on Mg(2+) as a cofactor. Mn(2+) serves as cofactor.

It catalyses the reaction NAD(+) + (deoxyribonucleotide)n-3'-hydroxyl + 5'-phospho-(deoxyribonucleotide)m = (deoxyribonucleotide)n+m + AMP + beta-nicotinamide D-nucleotide.. In terms of biological role, DNA ligase that catalyzes the formation of phosphodiester linkages between 5'-phosphoryl and 3'-hydroxyl groups in double-stranded DNA using NAD as a coenzyme and as the energy source for the reaction. It is essential for DNA replication and repair of damaged DNA. This Francisella tularensis subsp. holarctica (strain LVS) protein is DNA ligase.